The primary structure comprises 268 residues: MGILDAIKLGKEKEVAHAKTVRKLSGLEQAIKQRPPPRDFVGAVAERAGNGTVALIAEIKKASPSKGLIRSDFQVAAIAEAYRDGGAACLSVLTDQTFFQGKPADLELAKAVSGLPVLRKDFMIDPYQVHEARAMGADAILLILAMLDHGQAIELEAAAQAMGMGVLIEIHDEPELERAMAMQSRLIGINNRDLATFAADLTTSERLASKVDRNRIVISESGIGGHGDVIRLMEAGINGFLIGEQLLRARHIESATREIAQARLHACP.

This sequence belongs to the TrpC family.

The enzyme catalyses 1-(2-carboxyphenylamino)-1-deoxy-D-ribulose 5-phosphate + H(+) = (1S,2R)-1-C-(indol-3-yl)glycerol 3-phosphate + CO2 + H2O. The protein operates within amino-acid biosynthesis; L-tryptophan biosynthesis; L-tryptophan from chorismate: step 4/5. This Ralstonia nicotianae (strain ATCC BAA-1114 / GMI1000) (Ralstonia solanacearum) protein is Indole-3-glycerol phosphate synthase 2 (trpC2).